Consider the following 332-residue polypeptide: Ribose operon repressor (332 aa).

An HTH lacI-type domain is found at 2–56 (ATMKDIARLAQVSTSTVSHVINGSRFVSDEIREKVMRIVAELNYTPSAVARSLKV). Positions 4-23 (MKDIARLAQVSTSTVSHVIN) form a DNA-binding region, H-T-H motif.

In terms of biological role, transcriptional repressor for the ribose rbsDACBK operon. This is Ribose operon repressor (rbsR) from Haemophilus influenzae (strain ATCC 51907 / DSM 11121 / KW20 / Rd).